Consider the following 237-residue polypeptide: Large ribosomal subunit protein uL1 (237 aa).

Belongs to the universal ribosomal protein uL1 family. Part of the 50S ribosomal subunit.

Binds directly to 23S rRNA. The L1 stalk is quite mobile in the ribosome, and is involved in E site tRNA release. In terms of biological role, protein L1 is also a translational repressor protein, it controls the translation of the L11 operon by binding to its mRNA. The protein is Large ribosomal subunit protein uL1 of Nocardia farcinica (strain IFM 10152).